Consider the following 250-residue polypeptide: MYKLVLMRHGESQWNLENRFTGWTDVDLTEVGREQARRAGELLKREGYTFDLAYASVLKRAIRTLWIALDAMDAMYTPVGLNWRLNERHYGQLQGLNKAETAAKYGDEQVLIWRRAYAIAPEPLDIDDPRHPRFDSRYAKIPAEQLPATECLRDTVARVLPFWNESIAPAIRAGRRVLVAAHGNSLRALIKHLDNISDDAIVELNIPTGQPLVYELDENLRPIRHYYLGDAAEIEAAMAAVAAQGKAKKD.

Residues 8-15 (RHGESQWN), 21-22 (TG), Arg-60, 87-90 (ERHY), Lys-98, 114-115 (RR), and 183-184 (GN) each bind substrate. His-9 acts as the Tele-phosphohistidine intermediate in catalysis. The active-site Proton donor/acceptor is the Glu-87.

It belongs to the phosphoglycerate mutase family. BPG-dependent PGAM subfamily. In terms of assembly, homodimer.

The catalysed reaction is (2R)-2-phosphoglycerate = (2R)-3-phosphoglycerate. It participates in carbohydrate degradation; glycolysis; pyruvate from D-glyceraldehyde 3-phosphate: step 3/5. In terms of biological role, catalyzes the interconversion of 2-phosphoglycerate and 3-phosphoglycerate. This Bordetella avium (strain 197N) protein is 2,3-bisphosphoglycerate-dependent phosphoglycerate mutase.